Here is a 409-residue protein sequence, read N- to C-terminus: Failed axon connections homolog (409 aa).

A helical membrane pass occupies residues 68–88 (YLTGGALLAAAAYLLHELLVI). The segment at 372–409 (DEGAENSFSRTPDTDFTGHSLFDSDVDMDDYTEHEQCK) is disordered.

The protein belongs to the FAX family.

The protein localises to the membrane. May play a role in axonal development. This is Failed axon connections homolog (Faxc) from Rattus norvegicus (Rat).